The primary structure comprises 473 residues: ATP-dependent 6-phosphofructokinase 1 (473 aa).

The residue at position 71 (Ser71) is a Phosphoserine. Residues Gly102, 165–166 (RG), and 190–193 (GDGS) each bind ATP. A Mg(2+)-binding site is contributed by Asp191. Substrate is bound by residues 219–221 (TID), 264–266 (MGR), Glu320, and 376–379 (YMIR). The active-site Proton acceptor is the Asp221.

This sequence belongs to the phosphofructokinase type A (PFKA) family. PPi-dependent PFK group II subfamily. Atypical ATP-dependent clade 'X' sub-subfamily. As to quaternary structure, homotetramer. It depends on Mg(2+) as a cofactor. As to expression, expressed in roots, leaves, stems and flowers.

Its subcellular location is the cytoplasm. It catalyses the reaction beta-D-fructose 6-phosphate + ATP = beta-D-fructose 1,6-bisphosphate + ADP + H(+). The protein operates within carbohydrate degradation; glycolysis; D-glyceraldehyde 3-phosphate and glycerone phosphate from D-glucose: step 3/4. With respect to regulation, allosterically activated by AMP. In terms of biological role, catalyzes the phosphorylation of D-fructose 6-phosphate to fructose 1,6-bisphosphate by ATP, the first committing step of glycolysis. In Arabidopsis thaliana (Mouse-ear cress), this protein is ATP-dependent 6-phosphofructokinase 1.